We begin with the raw amino-acid sequence, 85 residues long: Large ribosomal subunit protein bL27 (85 aa).

The disordered stretch occupies residues 1 to 22 (MAHKKAGGSTNNGRDSESKRLG).

Belongs to the bacterial ribosomal protein bL27 family.

In Psychromonas ingrahamii (strain DSM 17664 / CCUG 51855 / 37), this protein is Large ribosomal subunit protein bL27.